The following is a 387-amino-acid chain: 3-dehydroquinate synthase (387 aa).

Belongs to the archaeal-type DHQ synthase family.

It carries out the reaction 2-amino-2,3,7-trideoxy-D-lyxo-hept-6-ulosonate + NAD(+) + H2O = 3-dehydroquinate + NH4(+) + NADH + H(+). Catalyzes the oxidative deamination and cyclization of 2-amino-3,7-dideoxy-D-threo-hept-6-ulosonic acid (ADH) to yield 3-dehydroquinate (DHQ), which is fed into the canonical shikimic pathway of aromatic amino acid biosynthesis. The polypeptide is 3-dehydroquinate synthase (Halobacterium salinarum (strain ATCC 29341 / DSM 671 / R1)).